The sequence spans 133 residues: Putative actin-depolymerizing factor 11 (133 aa).

The ADF-H domain occupies 1–133 (MVLHDDCKLT…SLDAIRRRIN (133 aa)).

This sequence belongs to the actin-binding proteins ADF family.

The protein localises to the cytoplasm. It is found in the cytoskeleton. Actin-depolymerizing protein. Severs actin filaments (F-actin) and binds to actin monomers. The sequence is that of Putative actin-depolymerizing factor 11 (ADF11) from Arabidopsis thaliana (Mouse-ear cress).